The sequence spans 350 residues: Outer membrane porin PhoE (350 aa).

Residues 1-21 (MKKSTLALVVMGVVASASVHA) form the signal peptide.

It belongs to the Gram-negative porin family. In terms of assembly, homotrimer.

It localises to the cell outer membrane. Uptake of inorganic phosphate, phosphorylated compounds, and some other negatively charged solutes. The chain is Outer membrane porin PhoE (phoE) from Enterobacter cloacae.